Consider the following 126-residue polypeptide: Histone H2B type 1-L (126 aa).

The segment covering 1-12 has biased composition (low complexity); sequence MPELAKSAPAPK. The segment at 1–36 is disordered; it reads MPELAKSAPAPKKGSKKAVTKAQKKDGKKRKRSRKE. Proline 2 carries the N-acetylproline modification. The residue at position 3 (glutamate 3) is an ADP-ribosyl glutamic acid. N6-(2-hydroxyisobutyryl)lysine; alternate is present on lysine 6. Lysine 6 carries the N6-(beta-hydroxybutyryl)lysine; alternate modification. Lysine 6 bears the N6-acetyllysine; alternate mark. Lysine 6 is subject to N6-butyryllysine; alternate. Lysine 6 bears the N6-crotonyllysine; alternate mark. Residue lysine 6 is modified to N6-lactoyllysine; alternate. Lysine 6 participates in a covalent cross-link: Glycyl lysine isopeptide (Lys-Gly) (interchain with G-Cter in SUMO2); alternate. Serine 7 is subject to ADP-ribosylserine. N6-(beta-hydroxybutyryl)lysine; alternate is present on lysine 12. 2 positions are modified to N6-acetyllysine; alternate: lysine 12 and lysine 13. Lysine 12 and lysine 13 each carry N6-crotonyllysine; alternate. N6-lactoyllysine; alternate is present on lysine 12. Position 13 is an N6-(2-hydroxyisobutyryl)lysine; alternate (lysine 13). Position 15 is a phosphoserine; by STK4/MST1 (serine 15). Lysine 16, lysine 17, lysine 21, and lysine 24 each carry N6-acetyllysine; alternate. 4 positions are modified to N6-crotonyllysine; alternate: lysine 16, lysine 17, lysine 21, and lysine 24. Residues lysine 16, lysine 17, lysine 21, and lysine 24 each carry the N6-lactoyllysine; alternate modification. Residues lysine 17 and lysine 21 each carry the N6-(beta-hydroxybutyryl)lysine; alternate modification. The residue at position 17 (lysine 17) is an N6-glutaryllysine; alternate. N6-(2-hydroxyisobutyryl)lysine; alternate is present on residues lysine 21 and lysine 24. Position 21 is an N6-butyryllysine; alternate (lysine 21). Residue lysine 21 forms a Glycyl lysine isopeptide (Lys-Gly) (interchain with G-Cter in SUMO2); alternate linkage. An N6-(2-hydroxyisobutyryl)lysine modification is found at lysine 25. An N6-(2-hydroxyisobutyryl)lysine; alternate modification is found at lysine 35. N6-(beta-hydroxybutyryl)lysine; alternate is present on lysine 35. Position 35 is an N6-crotonyllysine; alternate (lysine 35). At lysine 35 the chain carries N6-glutaryllysine; alternate. Lysine 35 carries the post-translational modification N6-succinyllysine; alternate. Residue lysine 35 forms a Glycyl lysine isopeptide (Lys-Gly) (interchain with G-Cter in ubiquitin); alternate linkage. Glutamate 36 bears the PolyADP-ribosyl glutamic acid mark. Phosphoserine; by AMPK is present on serine 37. Residues lysine 44, lysine 47, and lysine 58 each carry the N6-(2-hydroxyisobutyryl)lysine; alternate modification. Lysine 44 is modified (N6-lactoyllysine; alternate). N6-glutaryllysine; alternate is present on residues lysine 44 and lysine 47. Lysine 47 carries the N6-methyllysine; alternate modification. Position 58 is an N6,N6-dimethyllysine; alternate (lysine 58). At arginine 80 the chain carries Dimethylated arginine. At lysine 86 the chain carries N6-(2-hydroxyisobutyryl)lysine; alternate. Lysine 86 is subject to N6-(beta-hydroxybutyryl)lysine; alternate. Lysine 86 is modified (N6-acetyllysine; alternate). Lysine 86 is subject to N6-lactoyllysine; alternate. Position 86 is an N6,N6,N6-trimethyllysine; alternate (lysine 86). Arginine 87 and arginine 93 each carry omega-N-methylarginine. Lysine 109 carries the post-translational modification N6-(2-hydroxyisobutyryl)lysine; alternate. Lysine 109 is modified (N6-lactoyllysine; alternate). Lysine 109 is modified (N6-glutaryllysine; alternate). Position 109 is an N6-methyllysine; alternate (lysine 109). Serine 113 carries an O-linked (GlcNAc) serine glycan. Threonine 116 carries the phosphothreonine modification. Residues lysine 117 and lysine 121 each carry the N6-(2-hydroxyisobutyryl)lysine; alternate modification. 2 positions are modified to N6-(beta-hydroxybutyryl)lysine; alternate: lysine 117 and lysine 121. N6-lactoyllysine; alternate occurs at positions 117 and 121. Residues lysine 117 and lysine 121 each carry the N6-glutaryllysine; alternate modification. 2 positions are modified to N6-succinyllysine; alternate: lysine 117 and lysine 121. N6-malonyllysine; alternate is present on lysine 117. Lysine 117 is modified (N6-methylated lysine; alternate). Residue lysine 121 forms a Glycyl lysine isopeptide (Lys-Gly) (interchain with G-Cter in ubiquitin); alternate linkage.

The protein belongs to the histone H2B family. The nucleosome is a histone octamer containing two molecules each of H2A, H2B, H3 and H4 assembled in one H3-H4 heterotetramer and two H2A-H2B heterodimers. The octamer wraps approximately 147 bp of DNA. In terms of processing, monoubiquitination at Lys-35 (H2BK34Ub) by the MSL1/MSL2 dimer is required for histone H3 'Lys-4' (H3K4me) and 'Lys-79' (H3K79me) methylation and transcription activation at specific gene loci, such as HOXA9 and MEIS1 loci. Similarly, monoubiquitination at Lys-121 (H2BK120Ub) by the RNF20/40 complex gives a specific tag for epigenetic transcriptional activation and is also prerequisite for histone H3 'Lys-4' and 'Lys-79' methylation. It also functions cooperatively with the FACT dimer to stimulate elongation by RNA polymerase II. H2BK120Ub also acts as a regulator of mRNA splicing: deubiquitination by USP49 is required for efficient cotranscriptional splicing of a large set of exons. Post-translationally, phosphorylation at Ser-37 (H2BS36ph) by AMPK in response to stress promotes transcription. Phosphorylated on Ser-15 (H2BS14ph) by STK4/MST1 during apoptosis; which facilitates apoptotic chromatin condensation. Also phosphorylated on Ser-15 in response to DNA double strand breaks (DSBs), and in correlation with somatic hypermutation and immunoglobulin class-switch recombination. GlcNAcylation at Ser-113 promotes monoubiquitination of Lys-121. It fluctuates in response to extracellular glucose, and associates with transcribed genes. In terms of processing, ADP-ribosylated by PARP1 or PARP2 on Ser-7 (H2BS6ADPr) in response to DNA damage. H2BS6ADPr promotes recruitment of CHD1L. Mono-ADP-ribosylated on Glu-3 (H2BE2ADPr) by PARP3 in response to single-strand breaks. Poly ADP-ribosylation on Glu-36 (H2BE35ADPr) by PARP1 regulates adipogenesis: it inhibits phosphorylation at Ser-37 (H2BS36ph), thereby blocking expression of pro-adipogenetic genes. Post-translationally, crotonylation (Kcr) is specifically present in male germ cells and marks testis-specific genes in post-meiotic cells, including X-linked genes that escape sex chromosome inactivation in haploid cells. Crotonylation marks active promoters and enhancers and confers resistance to transcriptional repressors. It is also associated with post-meiotically activated genes on autosomes. Lactylated in macrophages by EP300/P300 by using lactoyl-CoA directly derived from endogenous or exogenous lactate, leading to stimulates gene transcription.

It is found in the nucleus. The protein localises to the chromosome. In terms of biological role, core component of nucleosome. Nucleosomes wrap and compact DNA into chromatin, limiting DNA accessibility to the cellular machineries which require DNA as a template. Histones thereby play a central role in transcription regulation, DNA repair, DNA replication and chromosomal stability. DNA accessibility is regulated via a complex set of post-translational modifications of histones, also called histone code, and nucleosome remodeling. The chain is Histone H2B type 1-L from Homo sapiens (Human).